The following is a 484-amino-acid chain: Glutamate--tRNA ligase (484 aa).

The short motif at 11-21 is the 'HIGH' region element; it reads PSPTGLLHIGN. The 'KMSKS' region motif lies at 255–259; the sequence is KLSKR. Lysine 258 provides a ligand contact to ATP.

The protein belongs to the class-I aminoacyl-tRNA synthetase family. Glutamate--tRNA ligase type 1 subfamily. In terms of assembly, monomer.

It is found in the cytoplasm. The catalysed reaction is tRNA(Glu) + L-glutamate + ATP = L-glutamyl-tRNA(Glu) + AMP + diphosphate. Its function is as follows. Catalyzes the attachment of glutamate to tRNA(Glu) in a two-step reaction: glutamate is first activated by ATP to form Glu-AMP and then transferred to the acceptor end of tRNA(Glu). In Streptococcus agalactiae serotype III (strain NEM316), this protein is Glutamate--tRNA ligase.